A 384-amino-acid polypeptide reads, in one-letter code: 8-amino-7-oxononanoate synthase (384 aa).

Residue Arg21 coordinates substrate. Gly108–Phe109 lines the pyridoxal 5'-phosphate pocket. His133 provides a ligand contact to substrate. The pyridoxal 5'-phosphate site is built by Ser179, His207, and Thr233. An N6-(pyridoxal phosphate)lysine modification is found at Lys236. Thr352 contacts substrate.

The protein belongs to the class-II pyridoxal-phosphate-dependent aminotransferase family. BioF subfamily. Homodimer. Requires pyridoxal 5'-phosphate as cofactor.

The catalysed reaction is 6-carboxyhexanoyl-[ACP] + L-alanine + H(+) = (8S)-8-amino-7-oxononanoate + holo-[ACP] + CO2. It functions in the pathway cofactor biosynthesis; biotin biosynthesis. Functionally, catalyzes the decarboxylative condensation of pimeloyl-[acyl-carrier protein] and L-alanine to produce 8-amino-7-oxononanoate (AON), [acyl-carrier protein], and carbon dioxide. This Escherichia coli O6:H1 (strain CFT073 / ATCC 700928 / UPEC) protein is 8-amino-7-oxononanoate synthase.